The primary structure comprises 176 residues: UPF0098 protein Rv2140c (176 aa).

At T2 the chain carries N-acetylthreonine.

It belongs to the UPF0098 family.

This Mycobacterium tuberculosis (strain ATCC 25618 / H37Rv) protein is UPF0098 protein Rv2140c.